The primary structure comprises 579 residues: Putative truncated flagellar export/assembly protein LfhA (579 aa).

The next 3 helical transmembrane spans lie at 86–106, 124–144, and 177–197; these read AIAG…IGIF, IGDG…AAII, and FVLA…SALL.

This sequence belongs to the FHIPEP (flagella/HR/invasion proteins export pore) family.

Its subcellular location is the cell inner membrane. This chain is Putative truncated flagellar export/assembly protein LfhA, found in Escherichia coli (strain K12).